A 481-amino-acid chain; its full sequence is Cysteine--tRNA ligase (481 aa).

Zn(2+) is bound at residue cysteine 29. Positions 31 to 41 match the 'HIGH' region motif; the sequence is PTVYDYSHLGH. Residues cysteine 210, histidine 235, and glutamate 239 each contribute to the Zn(2+) site. The 'KMSKS' region signature appears at 272 to 276; it reads KMSKS. ATP is bound at residue lysine 275.

This sequence belongs to the class-I aminoacyl-tRNA synthetase family. Monomer. Requires Zn(2+) as cofactor.

It localises to the cytoplasm. The catalysed reaction is tRNA(Cys) + L-cysteine + ATP = L-cysteinyl-tRNA(Cys) + AMP + diphosphate. This chain is Cysteine--tRNA ligase, found in Anaeromyxobacter dehalogenans (strain 2CP-C).